Consider the following 189-residue polypeptide: Elongation factor P (189 aa).

The protein belongs to the elongation factor P family.

Its subcellular location is the cytoplasm. Its pathway is protein biosynthesis; polypeptide chain elongation. Involved in peptide bond synthesis. Stimulates efficient translation and peptide-bond synthesis on native or reconstituted 70S ribosomes in vitro. Probably functions indirectly by altering the affinity of the ribosome for aminoacyl-tRNA, thus increasing their reactivity as acceptors for peptidyl transferase. This chain is Elongation factor P, found in Pseudomonas savastanoi pv. phaseolicola (strain 1448A / Race 6) (Pseudomonas syringae pv. phaseolicola (strain 1448A / Race 6)).